A 501-amino-acid polypeptide reads, in one-letter code: Cilia- and flagella-associated protein 45 (501 aa).

Residues 75 to 114 (MTAEDVAAAKREAEAKREQLQAVSKARKEKMLKLEEEAKK) are a coiled coil.

Belongs to the CFAP45 family.

It localises to the cell projection. It is found in the cilium. The protein resides in the flagellum. The chain is Cilia- and flagella-associated protein 45 from Chlamydomonas reinhardtii (Chlamydomonas smithii).